A 149-amino-acid polypeptide reads, in one-letter code: D-aminoacyl-tRNA deacylase (149 aa).

A Gly-cisPro motif, important for rejection of L-amino acids motif is present at residues 137 to 138 (GP).

The protein belongs to the DTD family. As to quaternary structure, homodimer.

It localises to the cytoplasm. It carries out the reaction glycyl-tRNA(Ala) + H2O = tRNA(Ala) + glycine + H(+). The enzyme catalyses a D-aminoacyl-tRNA + H2O = a tRNA + a D-alpha-amino acid + H(+). Its function is as follows. An aminoacyl-tRNA editing enzyme that deacylates mischarged D-aminoacyl-tRNAs. Also deacylates mischarged glycyl-tRNA(Ala), protecting cells against glycine mischarging by AlaRS. Acts via tRNA-based rather than protein-based catalysis; rejects L-amino acids rather than detecting D-amino acids in the active site. By recycling D-aminoacyl-tRNA to D-amino acids and free tRNA molecules, this enzyme counteracts the toxicity associated with the formation of D-aminoacyl-tRNA entities in vivo and helps enforce protein L-homochirality. This is D-aminoacyl-tRNA deacylase from Clostridium botulinum (strain 657 / Type Ba4).